Here is a 441-residue protein sequence, read N- to C-terminus: Arginine biosynthesis bifunctional protein ArgJ, mitochondrial (441 aa).

Residues Thr178, Lys204, Thr215, Glu304, Asn436, and Ser441 each contribute to the substrate site. The active-site Nucleophile is the Thr215.

This sequence belongs to the ArgJ family. Heterodimer of an alpha and a beta chain. The alpha and beta chains are autoproteolytically processed from a single precursor protein within the mitochondrion.

The protein localises to the mitochondrion matrix. The catalysed reaction is N(2)-acetyl-L-ornithine + L-glutamate = N-acetyl-L-glutamate + L-ornithine. It catalyses the reaction L-glutamate + acetyl-CoA = N-acetyl-L-glutamate + CoA + H(+). The protein operates within amino-acid biosynthesis; L-arginine biosynthesis; L-ornithine and N-acetyl-L-glutamate from L-glutamate and N(2)-acetyl-L-ornithine (cyclic): step 1/1. Its pathway is amino-acid biosynthesis; L-arginine biosynthesis; N(2)-acetyl-L-ornithine from L-glutamate: step 1/4. Catalyzes two activities which are involved in the cyclic version of arginine biosynthesis: the synthesis of acetylglutamate from glutamate and acetyl-CoA, and of ornithine by transacetylation between acetylornithine and glutamate. The polypeptide is Arginine biosynthesis bifunctional protein ArgJ, mitochondrial (Lodderomyces elongisporus (strain ATCC 11503 / CBS 2605 / JCM 1781 / NBRC 1676 / NRRL YB-4239) (Yeast)).